A 377-amino-acid polypeptide reads, in one-letter code: Erythronate-4-phosphate dehydrogenase (377 aa).

Substrate contacts are provided by serine 45 and threonine 67. NAD(+) contacts are provided by residues 127-128 (QV), aspartate 147, and threonine 176. Residue arginine 209 is part of the active site. Aspartate 233 provides a ligand contact to NAD(+). Glutamate 238 is an active-site residue. Residue histidine 255 is the Proton donor of the active site. Glycine 258 lines the NAD(+) pocket. Residue tyrosine 259 coordinates substrate.

Belongs to the D-isomer specific 2-hydroxyacid dehydrogenase family. PdxB subfamily. Homodimer.

It localises to the cytoplasm. The catalysed reaction is 4-phospho-D-erythronate + NAD(+) = (R)-3-hydroxy-2-oxo-4-phosphooxybutanoate + NADH + H(+). Its pathway is cofactor biosynthesis; pyridoxine 5'-phosphate biosynthesis; pyridoxine 5'-phosphate from D-erythrose 4-phosphate: step 2/5. Functionally, catalyzes the oxidation of erythronate-4-phosphate to 3-hydroxy-2-oxo-4-phosphonooxybutanoate. This Vibrio atlanticus (strain LGP32) (Vibrio splendidus (strain Mel32)) protein is Erythronate-4-phosphate dehydrogenase.